Here is a 179-residue protein sequence, read N- to C-terminus: Adenine phosphoribosyltransferase (179 aa).

The protein belongs to the purine/pyrimidine phosphoribosyltransferase family. As to quaternary structure, homodimer.

The protein localises to the cytoplasm. The catalysed reaction is AMP + diphosphate = 5-phospho-alpha-D-ribose 1-diphosphate + adenine. It functions in the pathway purine metabolism; AMP biosynthesis via salvage pathway; AMP from adenine: step 1/1. Functionally, catalyzes a salvage reaction resulting in the formation of AMP, that is energically less costly than de novo synthesis. The polypeptide is Adenine phosphoribosyltransferase (Gluconobacter oxydans (strain 621H) (Gluconobacter suboxydans)).